A 638-amino-acid polypeptide reads, in one-letter code: 1-deoxy-D-xylulose-5-phosphate synthase (638 aa).

Thiamine diphosphate is bound by residues histidine 79 and 120-122 (GHS). Residue aspartate 151 coordinates Mg(2+). Thiamine diphosphate is bound by residues 152–153 (GA), asparagine 182, tyrosine 291, and glutamate 373. Asparagine 182 contributes to the Mg(2+) binding site.

Belongs to the transketolase family. DXPS subfamily. As to quaternary structure, homodimer. The cofactor is Mg(2+). Thiamine diphosphate is required as a cofactor.

The enzyme catalyses D-glyceraldehyde 3-phosphate + pyruvate + H(+) = 1-deoxy-D-xylulose 5-phosphate + CO2. It participates in metabolic intermediate biosynthesis; 1-deoxy-D-xylulose 5-phosphate biosynthesis; 1-deoxy-D-xylulose 5-phosphate from D-glyceraldehyde 3-phosphate and pyruvate: step 1/1. Functionally, catalyzes the acyloin condensation reaction between C atoms 2 and 3 of pyruvate and glyceraldehyde 3-phosphate to yield 1-deoxy-D-xylulose-5-phosphate (DXP). This is 1-deoxy-D-xylulose-5-phosphate synthase from Xanthomonas euvesicatoria pv. vesicatoria (strain 85-10) (Xanthomonas campestris pv. vesicatoria).